Consider the following 464-residue polypeptide: Glutamate--tRNA ligase (464 aa).

The 'HIGH' region signature appears at 9–19 (PSPTGYLHIGG). The 'KMSKS' region signature appears at 242–246 (KISKR). K245 provides a ligand contact to ATP.

It belongs to the class-I aminoacyl-tRNA synthetase family. Glutamate--tRNA ligase type 1 subfamily. Monomer.

The protein resides in the cytoplasm. The enzyme catalyses tRNA(Glu) + L-glutamate + ATP = L-glutamyl-tRNA(Glu) + AMP + diphosphate. In terms of biological role, catalyzes the attachment of glutamate to tRNA(Glu) in a two-step reaction: glutamate is first activated by ATP to form Glu-AMP and then transferred to the acceptor end of tRNA(Glu). This is Glutamate--tRNA ligase from Neisseria meningitidis serogroup C / serotype 2a (strain ATCC 700532 / DSM 15464 / FAM18).